A 469-amino-acid chain; its full sequence is 6-phospho-beta-galactosidase (469 aa).

Residues Gln-19, His-116, Asn-159, Glu-160, and Asn-297 each coordinate D-galactose 6-phosphate. The active-site Proton donor is Glu-160. Glu-375 functions as the Nucleophile in the catalytic mechanism. Positions 428, 429, 435, and 437 each coordinate D-galactose 6-phosphate.

This sequence belongs to the glycosyl hydrolase 1 family.

It catalyses the reaction a 6-phospho-beta-D-galactoside + H2O = D-galactose 6-phosphate + an alcohol. Its pathway is carbohydrate metabolism; lactose degradation; D-galactose 6-phosphate and beta-D-glucose from lactose 6-phosphate: step 1/1. The chain is 6-phospho-beta-galactosidase from Streptococcus equi subsp. zooepidemicus (strain H70).